Reading from the N-terminus, the 315-residue chain is Homoserine kinase (315 aa).

97 to 107 is an ATP binding site; that stretch reads PPARGLGSSAT.

The protein belongs to the GHMP kinase family. Homoserine kinase subfamily.

Its subcellular location is the cytoplasm. It carries out the reaction L-homoserine + ATP = O-phospho-L-homoserine + ADP + H(+). It functions in the pathway amino-acid biosynthesis; L-threonine biosynthesis; L-threonine from L-aspartate: step 4/5. Functionally, catalyzes the ATP-dependent phosphorylation of L-homoserine to L-homoserine phosphate. The protein is Homoserine kinase of Synechococcus sp. (strain CC9605).